The sequence spans 612 residues: Glutamine--fructose-6-phosphate aminotransferase [isomerizing] (612 aa).

Cysteine 2 (nucleophile; for GATase activity) is an active-site residue. In terms of domain architecture, Glutamine amidotransferase type-2 spans 2 to 219; that stretch reads CGIVGANSTR…EGDIAIISKD (218 aa). SIS domains lie at 287–427 and 460–602; these read AKEL…LKNS and ISEY…VDQP. Lysine 607 functions as the For Fru-6P isomerization activity in the catalytic mechanism.

Homodimer.

The protein localises to the cytoplasm. It catalyses the reaction D-fructose 6-phosphate + L-glutamine = D-glucosamine 6-phosphate + L-glutamate. In terms of biological role, catalyzes the first step in hexosamine metabolism, converting fructose-6P into glucosamine-6P using glutamine as a nitrogen source. The sequence is that of Glutamine--fructose-6-phosphate aminotransferase [isomerizing] from Francisella tularensis subsp. tularensis (strain SCHU S4 / Schu 4).